Consider the following 103-residue polypeptide: V-type ATP synthase subunit F (103 aa).

The protein belongs to the V-ATPase F subunit family.

In terms of biological role, produces ATP from ADP in the presence of a proton gradient across the membrane. In Clostridium botulinum (strain Alaska E43 / Type E3), this protein is V-type ATP synthase subunit F.